A 233-amino-acid chain; its full sequence is Glucosamine-6-phosphate deaminase (233 aa).

Asp62 (proton acceptor; for enolization step) is an active-site residue. Catalysis depends on Asn128, which acts as the For ring-opening step. His130 serves as the catalytic Proton acceptor; for ring-opening step. Residue Glu135 is the For ring-opening step of the active site.

Belongs to the glucosamine/galactosamine-6-phosphate isomerase family. NagB subfamily.

It catalyses the reaction alpha-D-glucosamine 6-phosphate + H2O = beta-D-fructose 6-phosphate + NH4(+). The protein operates within amino-sugar metabolism; N-acetylneuraminate degradation; D-fructose 6-phosphate from N-acetylneuraminate: step 5/5. Its function is as follows. Catalyzes the reversible isomerization-deamination of glucosamine 6-phosphate (GlcN6P) to form fructose 6-phosphate (Fru6P) and ammonium ion. This Leuconostoc citreum (strain KM20) protein is Glucosamine-6-phosphate deaminase.